Consider the following 373-residue polypeptide: Histidinol-phosphate aminotransferase 2 (373 aa).

K229 bears the N6-(pyridoxal phosphate)lysine mark.

This sequence belongs to the class-II pyridoxal-phosphate-dependent aminotransferase family. Histidinol-phosphate aminotransferase subfamily. As to quaternary structure, homodimer. Requires pyridoxal 5'-phosphate as cofactor.

It carries out the reaction L-histidinol phosphate + 2-oxoglutarate = 3-(imidazol-4-yl)-2-oxopropyl phosphate + L-glutamate. The protein operates within amino-acid biosynthesis; L-histidine biosynthesis; L-histidine from 5-phospho-alpha-D-ribose 1-diphosphate: step 7/9. The protein is Histidinol-phosphate aminotransferase 2 of Hydrogenovibrio crunogenus (strain DSM 25203 / XCL-2) (Thiomicrospira crunogena).